The primary structure comprises 393 residues: Chorismate synthase (393 aa).

The NADP(+) site is built by R40 and R46. FMN-binding positions include 129–131 (RSS), 249–250 (QA), G301, 316–320 (KPIPT), and R342.

Belongs to the chorismate synthase family. In terms of assembly, homotetramer. It depends on FMNH2 as a cofactor.

The catalysed reaction is 5-O-(1-carboxyvinyl)-3-phosphoshikimate = chorismate + phosphate. It functions in the pathway metabolic intermediate biosynthesis; chorismate biosynthesis; chorismate from D-erythrose 4-phosphate and phosphoenolpyruvate: step 7/7. Catalyzes the anti-1,4-elimination of the C-3 phosphate and the C-6 proR hydrogen from 5-enolpyruvylshikimate-3-phosphate (EPSP) to yield chorismate, which is the branch point compound that serves as the starting substrate for the three terminal pathways of aromatic amino acid biosynthesis. This reaction introduces a second double bond into the aromatic ring system. The sequence is that of Chorismate synthase from Geobacter sulfurreducens (strain ATCC 51573 / DSM 12127 / PCA).